The following is a 396-amino-acid chain: MIEQSSLLNEVGAAITIKPNASRVLLSWDIVPEQSGMVALRKGSIIDGTNMQVLIPDYYKDSESKWGLPMYAVHRVDLHTQLRLLATQKEGPGQPCDVQVRSKVVSYDAEGAKVTTENGEVLRADLIIAADGVHSTAVKQVLGDEVVQAGDTGWACMRWLVPSDDFLSDPQTAHMIQDSTTRYFTAAGGAAALVWYPCRNNEVQNFLYLSREFDISHVGEDFRARVEPSVPLEYAKKHFATALQTVVKKANQVKFWKLVARGPIPKWHKDRLVLIGDAAHPMLTFQGQGGGQAIEDGAALGILLDNVHDRGEIEERLQLFEQIRRNRGSALQILSNTNPPVPQSVRDAAAEYLPGHRLSSTDDVNEYVFSFDVLAESKAALAILQSKERITKSGFL.

Glu-3 contributes to the FAD binding site. Active-site residues include Arg-158 and Tyr-196. FAD is bound by residues Asp-277 and Gly-290.

This sequence belongs to the paxM FAD-dependent monooxygenase family. As to quaternary structure, monomer. It depends on FAD as a cofactor.

Its function is as follows. FAD-dependent monooxygenase; part of the gene cluster that mediates the biosynthesis of the phomopsins, a group of hexapeptide mycotoxins which infects lupins and causes lupinosis disease in livestock. The role of phomE' within the phomopsins biosynthesis pathway has still to be determined. The pathway starts with the processing of the precursor phomA by several endopeptidases including kexin proteases as well as the cluster-specific S41 family peptidase phomP1 and the oligopeptidase phomG to produce 10 identical copies of the hexapeptide Tyr-Val-Ile-Pro-Ile-Asp. After being excised from the precursor peptide, the core peptides are cyclized and modified post-translationally by enzymes encoded within the gene cluster. The timing and order of proteolysis of the phomA precursor and PTMs are still unknown. Two tyrosinase-like enzymes, phomQ1 and phomQ2, catalyze the chlorination and hydroxylation of Tyr, respectively. PhomYb, is proposed to be involved in the construction of the macrocyclic structure. The other 4 ustYa family proteins may be involved in PTMs that generate the unique structure of phomopsin A. PhomYa is required for the hydroxylation of C-beta of Tyr. PhomYc, phomYd, and phomYe are responsible for the biosynthesis of 2,3-dehydroisoleucine (dIle), 2,3-dehydroaspartic acid (dAsp), and 3,4-dehydroproline (dPro), respectively. While dIle formation by phomYc is indispensable for the installation of dAsp by phomYd, the order of the other PTMs have not been elucidated yet. Most of the biosynthetic enzymes likely have broad substrate specificity, and thus, there might be a metabolic grid from a precursor to phomopsin A. The enzyme(s) responsible for the biosynthesis of 3,4-dehydrovaline (dVal) have also not been identified yet. Finally, phomM acts as an S-adenosylmethionine-dependent alpha-N-methyltransferase that catalyzes two successive N-methylation reactions, converting N-desmethyl-phomopsin A to phomopsin A and phomopsin A further to an N,N-dimethylated congener called phomopsin E. The sequence is that of FAD-dependent monooxygenase phomE' from Diaporthe leptostromiformis (Lupinosis disease fungus).